The sequence spans 409 residues: Argininosuccinate synthase (409 aa).

Residues 12–20 (AYSGGLDTS) and Ala39 each bind ATP. Residues Tyr90 and Ser95 each coordinate L-citrulline. Gly120 is a binding site for ATP. The L-aspartate site is built by Thr122, Asn126, and Asp127. Position 126 (Asn126) interacts with L-citrulline. L-citrulline contacts are provided by Arg130, Ser181, Ser190, Glu266, and Tyr278.

Belongs to the argininosuccinate synthase family. Type 1 subfamily. In terms of assembly, homotetramer.

It is found in the cytoplasm. The catalysed reaction is L-citrulline + L-aspartate + ATP = 2-(N(omega)-L-arginino)succinate + AMP + diphosphate + H(+). Its pathway is amino-acid biosynthesis; L-arginine biosynthesis; L-arginine from L-ornithine and carbamoyl phosphate: step 2/3. The polypeptide is Argininosuccinate synthase (Acidiphilium cryptum (strain JF-5)).